We begin with the raw amino-acid sequence, 428 residues long: Growth/differentiation factor 2 (428 aa).

A signal peptide spans M1 to Q22. The propeptide occupies K23–R318. N70 and N135 each carry an N-linked (GlcNAc...) asparagine glycan. C155 and C236 are disulfide-bonded. N262 carries N-linked (GlcNAc...) asparagine glycosylation. 3 disulfide bridges follow: C326–C392, C355–C425, and C359–C427. Positions S401–Y415 are interaction with ENG.

This sequence belongs to the TGF-beta family. In terms of assembly, homodimer; disulfide-linked. Detected in extracellular fluid as mature homodimer, and in complex with its propeptide. Interacts with ACVRL1, BMPR2 and ACVR2B with high affinity (in vitro). Identified in a complex with ACVRL1 and ACVR2B. Has ten times lower affinity for ACVR2A (in vitro). Interacts with ENG, forming a heterotetramer with a 2:2 stoichiometry. Can form a heteromeric complex with ENG and ACVRL1. Interacts with type I receptor ACVR1. Post-translationally, a reversible disulfide bond can be formed between the two subunits in the homodimer; this has no effect on GDF2 activity.

Its subcellular location is the secreted. Potent circulating inhibitor of angiogenesis. Signals through the type I activin receptor ACVRL1 but not other Alks. Signaling through SMAD1 in endothelial cells requires TGF-beta coreceptor endoglin/ENG. This Mus musculus (Mouse) protein is Growth/differentiation factor 2 (Gdf2).